The following is a 207-amino-acid chain: Holliday junction branch migration complex subunit RuvA (207 aa).

The tract at residues 1-64 is domain I; it reads MISYIKGELA…EDECSLFGFL (64 aa). Residues 65 to 143 form a domain II region; it reads TRDDLSMFKM…LDEVFESALS (79 aa). The flexible linker stretch occupies residues 144–155; the sequence is KNKKADNNSNVS. Residues 156-207 are domain III; the sequence is NVMMIRNDAVEALVSLGYSSKDALVAVKEVEDIENKDSETVLKEALKKLVKF.

Belongs to the RuvA family. Homotetramer. Forms an RuvA(8)-RuvB(12)-Holliday junction (HJ) complex. HJ DNA is sandwiched between 2 RuvA tetramers; dsDNA enters through RuvA and exits via RuvB. An RuvB hexamer assembles on each DNA strand where it exits the tetramer. Each RuvB hexamer is contacted by two RuvA subunits (via domain III) on 2 adjacent RuvB subunits; this complex drives branch migration. In the full resolvosome a probable DNA-RuvA(4)-RuvB(12)-RuvC(2) complex forms which resolves the HJ.

Its subcellular location is the cytoplasm. In terms of biological role, the RuvA-RuvB-RuvC complex processes Holliday junction (HJ) DNA during genetic recombination and DNA repair, while the RuvA-RuvB complex plays an important role in the rescue of blocked DNA replication forks via replication fork reversal (RFR). RuvA specifically binds to HJ cruciform DNA, conferring on it an open structure. The RuvB hexamer acts as an ATP-dependent pump, pulling dsDNA into and through the RuvAB complex. HJ branch migration allows RuvC to scan DNA until it finds its consensus sequence, where it cleaves and resolves the cruciform DNA. This is Holliday junction branch migration complex subunit RuvA from Lachnospira eligens (strain ATCC 27750 / DSM 3376 / VPI C15-48 / C15-B4) (Eubacterium eligens).